The primary structure comprises 547 residues: Membrane transporter D1 (547 aa).

The Cytoplasmic portion of the chain corresponds to 1–2 (MR). Residues 3–25 (ASVMLCAALGGFLFGYDTGVINA) traverse the membrane as a helical segment. The Extracellular segment spans residues 26–43 (ALFQMKDHFGFSEHSWQY). A helical transmembrane segment spans residues 44–64 (ALIVAIAIAGAFVGAFISGFI). The Cytoplasmic portion of the chain corresponds to 65–78 (SAAFGRRPCIAVAD). The chain crosses the membrane as a helical span at residues 79-99 (ALFVIGSVLMGAAPNVEVVLV). Residues 100–101 (SR) are Extracellular-facing. Residues 102 to 122 (VIVGLAIGISSATIPVYLAEV) form a helical membrane-spanning segment. Topologically, residues 123 to 136 (TSPKHRGATIVLNN) are cytoplasmic. Residues 137–157 (LFLTGGQFVAAGFTAIMVVFT) traverse the membrane as a helical segment. The Extracellular segment spans residues 158–164 (SKNIGWR). Residues 165–185 (VAIGIGALPAVVQAFCLLFFL) traverse the membrane as a helical segment. The Cytoplasmic segment spans residues 186–245 (PESPRWLLSKGHADRAKAVADKFEVDLCEFQEGDELPSVRIDYRPLMARDMRFRVVLSSG). A helical membrane pass occupies residues 246–266 (LQIIQQFSGINTIMYYSSVIL). The Extracellular segment spans residues 267-276 (YDAGFRDAIM). The chain crosses the membrane as a helical span at residues 277-297 (PVVLSIPLAFMNALFTAVAIF). Residues 298-308 (TVDRFGRRRML) are Cytoplasmic-facing. The helical transmembrane segment at 309–329 (LISVFGCLVLLVVIAIIGFFI) threads the bilayer. The Extracellular segment spans residues 330–339 (GTRISYSVGG). The helical transmembrane segment at 340 to 360 (GLFLALLAVFLALYAPGIGCI) threads the bilayer. Residues 361–385 (PWVIMGEIFPTHLRTSAASVATMAN) lie on the Cytoplasmic side of the membrane. The helical transmembrane segment at 386 to 406 (WGANVLVSQVFPILMGAIGVG) threads the bilayer. Position 407 (glycine 407) is a topological domain, extracellular. The chain crosses the membrane as a helical span at residues 408–428 (TFTIISGLMALGCIFVYFFAV). Topologically, residues 429-547 (ETKGLTLEQI…AIKAAPHEPK (119 aa)) are cytoplasmic. Disordered stretches follow at residues 449–468 (PPRFHEEGESGESGAGYRED) and 510–547 (VSNKFEERATSSSSDPQSLENQDEVRQAAIKAAPHEPK). Over residues 519 to 529 (TSSSSDPQSLE) the composition is skewed to polar residues.

It belongs to the major facilitator superfamily. Sugar transporter (TC 2.A.1.1) family.

The protein localises to the membrane. This Leishmania donovani protein is Membrane transporter D1.